A 486-amino-acid polypeptide reads, in one-letter code: Siroheme synthase (486 aa).

The tract at residues 1–204 is precorrin-2 dehydrogenase /sirohydrochlorin ferrochelatase; sequence MNYLPIFVDL…HQIEQAEALV (204 aa). NAD(+) contacts are provided by residues 22 to 23 and 43 to 44; these read HI and EK. Phosphoserine is present on Ser128. A uroporphyrinogen-III C-methyltransferase region spans residues 216–486; sequence GEVSLVGAGP…NKETHWKQAA (271 aa). Pro225 contacts S-adenosyl-L-methionine. Asp248 functions as the Proton acceptor in the catalytic mechanism. The active-site Proton donor is the Lys270. S-adenosyl-L-methionine contacts are provided by residues 301–303, Val306, 331–332, Met383, and Gly412; these read GGD and TA.

In the N-terminal section; belongs to the precorrin-2 dehydrogenase / sirohydrochlorin ferrochelatase family. This sequence in the C-terminal section; belongs to the precorrin methyltransferase family.

The catalysed reaction is uroporphyrinogen III + 2 S-adenosyl-L-methionine = precorrin-2 + 2 S-adenosyl-L-homocysteine + H(+). The enzyme catalyses precorrin-2 + NAD(+) = sirohydrochlorin + NADH + 2 H(+). It carries out the reaction siroheme + 2 H(+) = sirohydrochlorin + Fe(2+). It functions in the pathway cofactor biosynthesis; adenosylcobalamin biosynthesis; precorrin-2 from uroporphyrinogen III: step 1/1. It participates in cofactor biosynthesis; adenosylcobalamin biosynthesis; sirohydrochlorin from precorrin-2: step 1/1. Its pathway is porphyrin-containing compound metabolism; siroheme biosynthesis; precorrin-2 from uroporphyrinogen III: step 1/1. The protein operates within porphyrin-containing compound metabolism; siroheme biosynthesis; siroheme from sirohydrochlorin: step 1/1. It functions in the pathway porphyrin-containing compound metabolism; siroheme biosynthesis; sirohydrochlorin from precorrin-2: step 1/1. Multifunctional enzyme that catalyzes the SAM-dependent methylations of uroporphyrinogen III at position C-2 and C-7 to form precorrin-2 via precorrin-1. Then it catalyzes the NAD-dependent ring dehydrogenation of precorrin-2 to yield sirohydrochlorin. Finally, it catalyzes the ferrochelation of sirohydrochlorin to yield siroheme. The sequence is that of Siroheme synthase from Actinobacillus pleuropneumoniae serotype 3 (strain JL03).